The following is a 638-amino-acid chain: 1-deoxy-D-xylulose-5-phosphate synthase (638 aa).

Residues histidine 78 and 119 to 121 contribute to the thiamine diphosphate site; that span reads AHS. Aspartate 150 contacts Mg(2+). Thiamine diphosphate is bound by residues 151 to 152, asparagine 179, tyrosine 288, and glutamate 370; that span reads GS. Asparagine 179 contacts Mg(2+).

Belongs to the transketolase family. DXPS subfamily. Homodimer. Requires Mg(2+) as cofactor. Thiamine diphosphate is required as a cofactor.

The enzyme catalyses D-glyceraldehyde 3-phosphate + pyruvate + H(+) = 1-deoxy-D-xylulose 5-phosphate + CO2. Its pathway is metabolic intermediate biosynthesis; 1-deoxy-D-xylulose 5-phosphate biosynthesis; 1-deoxy-D-xylulose 5-phosphate from D-glyceraldehyde 3-phosphate and pyruvate: step 1/1. Functionally, catalyzes the acyloin condensation reaction between C atoms 2 and 3 of pyruvate and glyceraldehyde 3-phosphate to yield 1-deoxy-D-xylulose-5-phosphate (DXP). The polypeptide is 1-deoxy-D-xylulose-5-phosphate synthase (Brucella anthropi (strain ATCC 49188 / DSM 6882 / CCUG 24695 / JCM 21032 / LMG 3331 / NBRC 15819 / NCTC 12168 / Alc 37) (Ochrobactrum anthropi)).